The sequence spans 401 residues: tRNA (guanine-N(7)-)-methyltransferase non-catalytic subunit wuho (401 aa).

A disordered region spans residues 45–85; sequence KGRPRKYFDADSDSDEEQQNGDEPGTGKNNGGGDTGKKDQD. Acidic residues predominate over residues 54–64; that stretch reads ADSDSDEEQQN. WD repeat units lie at residues 86–125, 174–213, and 217–255; these read DQTN…RTLK, GHMS…NIET, and GHTE…ELAR.

The protein belongs to the WD repeat TRM82 family. Forms a heterodimer with the catalytic subunit.

The protein resides in the nucleus. The protein operates within tRNA modification; N(7)-methylguanine-tRNA biosynthesis. In terms of biological role, required for the formation of N(7)-methylguanine at position 46 (m7G46) in tRNA. In the complex, it is required to stabilize and induce conformational changes of the catalytic subunit. This Culex quinquefasciatus (Southern house mosquito) protein is tRNA (guanine-N(7)-)-methyltransferase non-catalytic subunit wuho.